The sequence spans 198 residues: Recombination protein RecR (198 aa).

A C4-type zinc finger spans residues 57–72 (CSVCHNITDTDPCRIC). Residues 80–175 (SVICVVQDAK…KVTRIAHGLP (96 aa)) form the Toprim domain.

Belongs to the RecR family.

May play a role in DNA repair. It seems to be involved in an RecBC-independent recombinational process of DNA repair. It may act with RecF and RecO. This chain is Recombination protein RecR, found in Halalkalibacterium halodurans (strain ATCC BAA-125 / DSM 18197 / FERM 7344 / JCM 9153 / C-125) (Bacillus halodurans).